A 176-amino-acid polypeptide reads, in one-letter code: Nucleoside triphosphate/diphosphate phosphatase (176 aa).

The active-site Proton donor is the arginine 23. Positions 87, 103, 105, 107, 120, and 123 each coordinate Mg(2+).

The protein belongs to the Ntdp family. Requires Mg(2+) as cofactor.

The catalysed reaction is a ribonucleoside 5'-triphosphate + H2O = a ribonucleoside 5'-diphosphate + phosphate + H(+). It catalyses the reaction a ribonucleoside 5'-diphosphate + H2O = a ribonucleoside 5'-phosphate + phosphate + H(+). Functionally, has nucleoside phosphatase activity towards nucleoside triphosphates and nucleoside diphosphates. In Bacillus cereus (strain AH820), this protein is Nucleoside triphosphate/diphosphate phosphatase.